The primary structure comprises 144 residues: Large ribosomal subunit protein uL15 (144 aa).

The tract at residues 1–51 is disordered; sequence MELNSIKPGSGSKHAKRRVGRGIGSGLGKTAGRGHKGQKSRAGGYHKVGFE. Gly residues predominate over residues 21–31; the sequence is RGIGSGLGKTA.

It belongs to the universal ribosomal protein uL15 family. As to quaternary structure, part of the 50S ribosomal subunit.

Its function is as follows. Binds to the 23S rRNA. This chain is Large ribosomal subunit protein uL15, found in Leptothrix cholodnii (strain ATCC 51168 / LMG 8142 / SP-6) (Leptothrix discophora (strain SP-6)).